A 404-amino-acid polypeptide reads, in one-letter code: Corticosteroid-binding globulin (404 aa).

Positions 1–30 (MAWSTRTMMSLALYTCFLWLLTSGLKTVQS) are cleaved as a signal peptide. 2 N-linked (GlcNAc...) asparagine glycosylation sites follow: Asn-95 and Asn-225. Cortisol is bound at residue Gln-253. N-linked (GlcNAc...) asparagine glycosylation occurs at Asn-259. Glu-285 is a binding site for cortisol. Asn-326 carries N-linked (GlcNAc...) asparagine glycosylation. Trp-392 contributes to the cortisol binding site.

It belongs to the serpin family. As to expression, expressed by the liver; secreted in plasma.

The protein resides in the secreted. Major transport protein for glucocorticoids and progestins in the blood of almost all vertebrate species. The sequence is that of Corticosteroid-binding globulin (SERPINA6) from Mesocricetus auratus (Golden hamster).